The primary structure comprises 566 residues: Phosphatidylinositol 4-kinase gamma 4 (566 aa).

Ubiquitin-like domains are found at residues 34-111 and 112-190; these read TIMI…SDLQ and VLDV…AKVR. The segment covering 250–263 has biased composition (polar residues); sequence DGLKSGNSPVRSSE. The tract at residues 250–272 is disordered; the sequence is DGLKSGNSPVRSSEGTGGAYFMQ. The PI3K/PI4K catalytic domain occupies 255 to 547; it reads GNSPVRSSEG…AVLPGTSEAA (293 aa). Positions 261–267 are G-loop; the sequence is SSEGTGG. Residues 262 to 268, K284, and 374 to 377 contribute to the ATP site; these read SEGTGGA and QMFT. The interval 407-415 is catalytic loop; sequence ANADRHGGN. Residues 430–456 form an activation loop region; sequence PIDHGYCLPESFEDCTFEWLYWPQARK. An ATP-binding site is contributed by D432.

The protein belongs to the PI3/PI4-kinase family. Type II PI4K subfamily. In terms of assembly, interacts with RPN10, UFD1 and CDC48 in vitro. Autophosphorylated.

The protein localises to the membrane. The catalysed reaction is a 1,2-diacyl-sn-glycero-3-phospho-(1D-myo-inositol) + ATP = a 1,2-diacyl-sn-glycero-3-phospho-(1D-myo-inositol 4-phosphate) + ADP + H(+). Its function is as follows. The phosphorylation of phosphatidylinositol (PI) to PI4P is the first committed step in the generation of phosphatidylinositol 4,5-bisphosphate (PIP2), a precursor of the second messenger inositol 1,4,5-trisphosphate (InsP3). Undergoes autophosphorylation and phosphorylates serine/threonine residues of protein substrates. Phosphorylates RPN10 and UFD1 in vitro. This chain is Phosphatidylinositol 4-kinase gamma 4, found in Arabidopsis thaliana (Mouse-ear cress).